The following is a 254-amino-acid chain: Putative epimerase LsrE (254 aa).

Residues 14 to 34 form a helical membrane-spanning segment; sequence VALLASYPLSVGILAGQWIAL. A divalent metal cation-binding residues include H50, D52, and H81. Catalysis depends on D52, which acts as the Proton acceptor. Substrate is bound by residues H81, 166 to 169, 199 to 201, and 221 to 222; these read GYGS, DGS, and GS. D199 is an a divalent metal cation binding site. D199 functions as the Proton donor in the catalytic mechanism.

This sequence belongs to the ribulose-phosphate 3-epimerase family. Requires a divalent metal cation as cofactor.

It localises to the cell membrane. The polypeptide is Putative epimerase LsrE (lsrE) (Salmonella paratyphi A (strain ATCC 9150 / SARB42)).